Reading from the N-terminus, the 72-residue chain is BBSome-interacting protein 1 (72 aa).

The protein belongs to the BBIP10 family.

It localises to the cell projection. Its subcellular location is the cilium. It is found in the cytoplasm. Required for primary cilia assembly. This is BBSome-interacting protein 1 (bbip1) from Danio rerio (Zebrafish).